Consider the following 66-residue polypeptide: Cold shock protein CspA (66 aa).

The CSD domain maps to 1 to 66 (MKQGTVKWFN…GPQAANVVKL (66 aa)).

It is found in the cytoplasm. In terms of biological role, involved in cold stress response. This is Cold shock protein CspA (cspA) from Staphylococcus haemolyticus (strain JCSC1435).